Consider the following 945-residue polypeptide: Netrin receptor UNC5B (945 aa).

The signal sequence occupies residues 1–26; that stretch reads MRARSGARGALLLALLLCWDPTPSLA. Residues 27 to 377 are Extracellular-facing; that stretch reads GIDSGGQALP…LEPSGDVALY (351 aa). Residues 48 to 145 enclose the Ig-like domain; that stretch reads PHFLLEPEDA…SGTTKSRRAY (98 aa). 9 disulfides stabilise this stretch: C69–C130, C81–C128, C174–C225, C258–C295, C262–C299, C273–C285, C314–C348, C318–C353, and C326–C338. Residues 153–242 enclose the Ig-like C2-type domain; it reads KNFDQEPLAK…KRRSTTATVI (90 aa). N222 carries an N-linked (GlcNAc...) asparagine glycan. TSP type-1 domains are found at residues 246–300 and 302–354; these read NGGW…TVCP and DGAW…GLCV. N347 is a glycosylation site (N-linked (GlcNAc...) asparagine). The helical transmembrane segment at 378 to 398 threads the bilayer; the sequence is AGLVVAVFVVLAVLMAVGVIV. At 399–945 the chain is on the cytoplasmic side; it reads YRRNCRDFDT…LVAMTTDGDC (547 aa). A lipid anchor (S-palmitoyl cysteine) is attached at C403. Positions 543–686 constitute a ZU5 domain; the sequence is SSVSGTFGCL…LGTYVFTGES (144 aa). Y581 is subject to Phosphotyrosine. The segment at 689–838 is UPA domain; the sequence is RSAVKRLQLA…AETPAGSLDA (150 aa). The segment at 707–725 is interaction with DCC; it reads SLEYSLRVYCLEDTPAALK. The Death domain maps to 865–943; the sequence is KICNSLDAPN…EMLVAMTTDG (79 aa).

Belongs to the unc-5 family. In terms of assembly, interacts with the cytoplasmic part of DCC. Interacts with GNAI2 via its cytoplasmic part. Interacts (via death domain) with DAPK1 (via death domain). Interacts (via extracellular domain) with FLRT3 (via extracellular domain); the interaction is direct. Interacts (via extracellular domain) with FLRT2 and FLRT3 (via extracellular domain), but has higher affinity for FLRT3. Identified in a complex with FLRT3 and ADGRL3; does not interact with ADGRL3 by itself. Phosphorylated on cytoplasmic tyrosine residues. In terms of processing, proteolytically cleaved by caspases during apoptosis. The cleavage does not take place when the receptor is associated with netrin ligand. Its cleavage by caspases is required to induce apoptosis. Post-translationally, palmitoylation is required for pro-apoptotic activity, but not for location at lipid rafts. In terms of tissue distribution, mainly expressed in regions of differentiating neurons. Expressed in the developing sensory ganglia that flank the spinal cord from E12, peaking at E14. Expressed in the roof plate region of the spinal cord from E14.

Its subcellular location is the cell membrane. It localises to the membrane raft. Receptor for netrin required for axon guidance. Mediates axon repulsion of neuronal growth cones in the developing nervous system upon ligand binding. Axon repulsion in growth cones may be caused by its association with DCC that may trigger signaling for repulsion. Functions as a netrin receptor that negatively regulates vascular branching during angiogenesis. Mediates retraction of tip cell filopodia on endothelial growth cones in response to netrin. It also acts as a dependence receptor required for apoptosis induction when not associated with netrin ligand. Mediates apoptosis by activating DAPK1. In the absence of NTN1, activates DAPK1 by reducing its autoinhibitory phosphorylation at Ser-308 thereby increasing its catalytic activity. This chain is Netrin receptor UNC5B (Unc5b), found in Rattus norvegicus (Rat).